The primary structure comprises 540 residues: PTS system alpha-glucoside-specific EIICB component (540 aa).

Residues methionine 1–glutamate 420 form the PTS EIIC type-1 domain. 11 helical membrane-spanning segments follow: residues methionine 12–leucine 32, alanine 87–methionine 107, isoleucine 130–valine 150, phenylalanine 174–tryptophan 194, isoleucine 201–phenylalanine 221, isoleucine 225–valine 245, phenylalanine 277–phenylalanine 297, valine 307–leucine 327, phenylalanine 329–methionine 349, valine 352–proline 372, and serine 384–phenylalanine 404. The PTS EIIB type-1 domain maps to leucine 448–threonine 530. The active-site Phosphocysteine intermediate; for EIIB activity is the cysteine 470.

It localises to the cell membrane. In terms of biological role, the phosphoenolpyruvate-dependent sugar phosphotransferase system (sugar PTS), a major carbohydrate active -transport system, catalyzes the phosphorylation of incoming sugar substrates concomitantly with their translocation across the cell membrane. This system is involved in alpha-glucoside transport. Functionally, involved in the transport and simultaneous phosphorylation at O-6 of the glucosyl moiety of sucrose and its five linkage-isomeric alpha-D-glucosyl-D-fructoses. Can also transport maltose, isomaltose and maltitol, phosphorylating at O-6 of their non-reducing glucose portion. The polypeptide is PTS system alpha-glucoside-specific EIICB component (aglA) (Klebsiella pneumoniae).